The following is an 84-amino-acid chain: Small ribosomal subunit protein uS15 (84 aa).

The protein belongs to the universal ribosomal protein uS15 family. As to quaternary structure, part of the 30S ribosomal subunit. Forms a bridge to the 50S subunit in the 70S ribosome, contacting the 23S rRNA.

In terms of biological role, one of the primary rRNA binding proteins, it binds directly to 16S rRNA where it helps nucleate assembly of the platform of the 30S subunit by binding and bridging several RNA helices of the 16S rRNA. Its function is as follows. Forms an intersubunit bridge (bridge B4) with the 23S rRNA of the 50S subunit in the ribosome. The protein is Small ribosomal subunit protein uS15 of Akkermansia muciniphila (strain ATCC BAA-835 / DSM 22959 / JCM 33894 / BCRC 81048 / CCUG 64013 / CIP 107961 / Muc).